The primary structure comprises 442 residues: Probable xylan O-acetyltransferase 8 (442 aa).

The Cytoplasmic segment spans residues 1–13; the sequence is MVQLPAMKRVKGR. The chain crosses the membrane as a helical; Signal-anchor for type II membrane protein span at residues 14 to 34; that stretch reads APLSVVVAIIGGLALAGIIFT. Over 35 to 442 the chain is Lumenal; the sequence is EDLRGLTEVK…TWNRLLYAHL (408 aa). A glycan (N-linked (GlcNAc...) asparagine) is linked at N96. 4 cysteine pairs are disulfide-bonded: C100/C151, C122/C187, C131/C426, and C344/C422. Positions 174-176 match the GDS motif motif; the sequence is GDS. S176 acts as the Nucleophile in catalysis. 3 N-linked (GlcNAc...) asparagine glycosylation sites follow: N217, N346, and N384. The Proton donor role is filled by D421. The short motif at 421–424 is the DXXH motif element; the sequence is DCIH. Residue H424 is the Proton acceptor of the active site.

Belongs to the PC-esterase family. TBL subfamily.

It localises to the golgi apparatus membrane. Its function is as follows. Probable xylan acetyltransferase required for 2-O- and 3-O-monoacetylation of xylosyl residues in xylan. Possesses extremely low activity in vitro. This chain is Probable xylan O-acetyltransferase 8, found in Oryza sativa subsp. japonica (Rice).